Consider the following 229-residue polypeptide: MDAESIEWKLTANLRNGPTFFQPLADSIEPLQFKLIGSDTVATAFPVFDTKYIPDSLINYLFKLFNLEIESGKTYPQLHSLTKQGFLNYWFHSFAVVVLQTDEKFIQDNQDWNSVLLGTFYIKPNYAPRCSHNCNAGFLVNGAHRGQKVGYRLAQVYLNWAPLLGYKYSIFNLVFVTNQASWKIWDKLNFQRIGLVPHAGILNGFSEPVDAIIYGKDLTKIEPEFLSME.

In terms of domain architecture, N-acetyltransferase spans 65-219; that stretch reads FNLEIESGKT…DAIIYGKDLT (155 aa). Substrate is bound at residue N135. CoA is bound at residue 145–150; that stretch reads RGQKVG. 172 to 173 serves as a coordination point for substrate; that stretch reads NL.

It belongs to the acetyltransferase family. As to quaternary structure, homodimer. Post-translationally, not glycosylated.

It is found in the cytoplasm. The protein localises to the mitochondrion. It carries out the reaction L-glutamate 5-semialdehyde + acetyl-CoA = N-acetyl-L-glutamate 5-semialdehyde + CoA + H(+). Functionally, N-acetyltransferase involved in oxidative stress resistance. Acetylates the toxic proline metabolism intermediate (S)-1-pyrroline-5-carboxylate (P5C), or more likely its spontaneously forming tautomer glutamate-5-semialdehyde (GSA) into N-acetyl-GSA for arginine synthesis in the mitochondria. P5C has been shown to increase the levels of reactive oxygen species (ROS) in the cell by inhibiting the function of the respiratory chain in the mitochondria. The enzyme is able to reduce intracellular ROS levels under P5C-induced oxidative stress and protects cells from damage by oxidative stress. Also acetylates and thereby detoxifies the proline analog azetidine-2-carboxylate (AZC), however it is unlikely that AZC is a natural substrate as it occurs only in plants belonging to the Lilaceae family. Does not acetylate proline. This Saccharomyces cerevisiae (Baker's yeast) protein is N-acetyltransferase MPR1.